A 180-amino-acid chain; its full sequence is Probable RNA 2'-phosphotransferase (180 aa).

This sequence belongs to the KptA/TPT1 family.

Its function is as follows. Removes the 2'-phosphate from RNA via an intermediate in which the phosphate is ADP-ribosylated by NAD followed by a presumed transesterification to release the RNA and generate ADP-ribose 1''-2''-cyclic phosphate (APPR&gt;P). May function as an ADP-ribosylase. This Pectobacterium atrosepticum (strain SCRI 1043 / ATCC BAA-672) (Erwinia carotovora subsp. atroseptica) protein is Probable RNA 2'-phosphotransferase.